The chain runs to 205 residues: Small ribosomal subunit protein uS5 (205 aa).

In terms of domain architecture, S5 DRBM spans 49–112; sequence LVDEVLDINM…VSAKINLVKV (64 aa).

This sequence belongs to the universal ribosomal protein uS5 family. Part of the 30S ribosomal subunit. Contacts protein S4.

In terms of biological role, with S4 and S12 plays an important role in translational accuracy. This is Small ribosomal subunit protein uS5 from Methanospirillum hungatei JF-1 (strain ATCC 27890 / DSM 864 / NBRC 100397 / JF-1).